The sequence spans 265 residues: Phosphatidylglycerol--prolipoprotein diacylglyceryl transferase (265 aa).

7 helical membrane-spanning segments follow: residues A11 to I31, M56 to Y76, I91 to L111, F120 to I140, Q173 to G193, V198 to F218, and W233 to L253. R139 serves as a coordination point for a 1,2-diacyl-sn-glycero-3-phospho-(1'-sn-glycerol).

This sequence belongs to the Lgt family.

The protein localises to the cell inner membrane. It carries out the reaction L-cysteinyl-[prolipoprotein] + a 1,2-diacyl-sn-glycero-3-phospho-(1'-sn-glycerol) = an S-1,2-diacyl-sn-glyceryl-L-cysteinyl-[prolipoprotein] + sn-glycerol 1-phosphate + H(+). It participates in protein modification; lipoprotein biosynthesis (diacylglyceryl transfer). Its function is as follows. Catalyzes the transfer of the diacylglyceryl group from phosphatidylglycerol to the sulfhydryl group of the N-terminal cysteine of a prolipoprotein, the first step in the formation of mature lipoproteins. In Nitratidesulfovibrio vulgaris (strain DSM 19637 / Miyazaki F) (Desulfovibrio vulgaris), this protein is Phosphatidylglycerol--prolipoprotein diacylglyceryl transferase.